Consider the following 764-residue polypeptide: 5-methyltetrahydropteroyltriglutamate--homocysteine methyltransferase (764 aa).

5-methyltetrahydropteroyltri-L-glutamate is bound by residues 16-19 (RELK) and K121. L-homocysteine contacts are provided by residues 440 to 442 (IGS) and E493. L-methionine contacts are provided by residues 440–442 (IGS) and E493. 5-methyltetrahydropteroyltri-L-glutamate-binding positions include 524-525 (RC) and W570. Residue D608 participates in L-homocysteine binding. D608 contributes to the L-methionine binding site. E614 lines the 5-methyltetrahydropteroyltri-L-glutamate pocket. H650, C652, and E674 together coordinate Zn(2+). H703 serves as the catalytic Proton donor. Position 735 (C735) interacts with Zn(2+).

It belongs to the vitamin-B12 independent methionine synthase family. Zn(2+) is required as a cofactor.

The enzyme catalyses 5-methyltetrahydropteroyltri-L-glutamate + L-homocysteine = tetrahydropteroyltri-L-glutamate + L-methionine. Its pathway is amino-acid biosynthesis; L-methionine biosynthesis via de novo pathway; L-methionine from L-homocysteine (MetE route): step 1/1. Functionally, catalyzes the transfer of a methyl group from 5-methyltetrahydrofolate to homocysteine resulting in methionine formation. The chain is 5-methyltetrahydropteroyltriglutamate--homocysteine methyltransferase from Burkholderia orbicola (strain MC0-3).